We begin with the raw amino-acid sequence, 603 residues long: Nuclear receptor subfamily 2 group C member 1 (603 aa).

The required for interaction with KAT2B stretch occupies residues 1-178 (MATIEEIAHQ…RLQRCIAFGM (178 aa)). The segment at residues 110–185 (FDLCVVCGDK…FGMKQDSVQC (76 aa)) is a DNA-binding region (nuclear receptor). NR C4-type zinc fingers lie at residues 113–133 (CVVCGDKASGRHYGAVTCEGC) and 149–173 (CRGSKDCIINKHHRNRCQYCRLQRC). A phosphoserine mark is found at Ser197 and Ser215. Thr220 carries the phosphothreonine modification. Thr222 carries the phosphothreonine; by MAPK1 modification. Lys250 is covalently cross-linked (Glycyl lysine isopeptide (Lys-Gly) (interchain with G-Cter in SUMO2)). Residues 348-590 (GSVHLITGDS…SVIPHILKME (243 aa)) enclose the NR LBD domain. Ser581 carries the post-translational modification Phosphoserine; by PKC. Positions 584 to 603 (PHILKMEPADYNSQIIGHSI) are required for interaction with NRIP1. Residue Lys588 forms a Glycyl lysine isopeptide (Lys-Gly) (interchain with G-Cter in SUMO2) linkage.

Belongs to the nuclear hormone receptor family. NR2 subfamily. In terms of assembly, homodimer. Heterodimer; binds DNA as a heterodimer with NR2C2 required for chromatin remodeling and for binding to promoter regions such as globin DR1 repeats. Interacts with NRIP1 (via its LXXLL motifs); the interaction provides corepressor activity. Interacts with HDAC3 (via the DNA-binding domain). Interacts with HDAC4 (via the DNA-binding domain). Interacts with PIAS1; the interaction is required for sumoylation of NR2C1. Interacts with UBE2I; the interaction is required for sumoylation of NR2C1. Interacts with KAT2B; the interaction acts as a corepressor of gene expression. Interacts with ESR1; the interaction prevents homodimerization of ESR1 and suppresses its transcriptional activity and cell growth. Sumoylation requires both PIAS1 and UBE2I. Sumoylation appears to dissociate NR2C1 from the PML nuclear bodies. Enhances the interaction with NRIP1 but inhibits interaction with KAT2B. In proliferating cells, stimulation by all-trans retinoic acid, activation of MAPK1-mediated phosphorylation and recruitment to PML bodies with subsequent sumoylation, suppresses OCT4 expression. Post-translationally, phosphorylated on several serine and threonine residues. Phosphorylation on Thr-222, stimulated by all-trans retinoic acid (atRA) mediates PML location and sumoylation in proliferating cells which then modulates its association with effector molecules, KAT2B and NRIP1. Phosphorylation on Ser-581 by PKC is important for protein stability and function as activator of RARB.

Its subcellular location is the nucleus. It localises to the PML body. In terms of biological role, orphan nuclear receptor. Binds the IR7 element in the promoter of its own gene in an autoregulatory negative feedback mechanism. Primarily repressor of a broad range of genes. Binds to hormone response elements (HREs) consisting of two 5'-AGGTCA-3' half site direct repeat consensus sequences. Together with NR2C2, forms the core of the DRED (direct repeat erythroid-definitive) complex that represses embryonic and fetal globin transcription. Also activator of OCT4 gene expression. May be involved in stem cell proliferation and differentiation. Mediator of retinoic acid-regulated preadipocyte proliferation. This is Nuclear receptor subfamily 2 group C member 1 (NR2C1) from Homo sapiens (Human).